Consider the following 412-residue polypeptide: Putative competence-damage inducible protein (412 aa).

This sequence belongs to the CinA family.

The sequence is that of Putative competence-damage inducible protein from Bacillus mycoides (strain KBAB4) (Bacillus weihenstephanensis).